A 157-amino-acid polypeptide reads, in one-letter code: Protein-export protein SecB (157 aa).

This sequence belongs to the SecB family. Homotetramer, a dimer of dimers. One homotetramer interacts with 1 SecA dimer.

It localises to the cytoplasm. One of the proteins required for the normal export of preproteins out of the cell cytoplasm. It is a molecular chaperone that binds to a subset of precursor proteins, maintaining them in a translocation-competent state. It also specifically binds to its receptor SecA. The chain is Protein-export protein SecB from Alcanivorax borkumensis (strain ATCC 700651 / DSM 11573 / NCIMB 13689 / SK2).